Here is a 285-residue protein sequence, read N- to C-terminus: Bifunctional protein FolD (285 aa).

Residues 166–168 (GAS) and I232 each bind NADP(+).

The protein belongs to the tetrahydrofolate dehydrogenase/cyclohydrolase family. In terms of assembly, homodimer.

The catalysed reaction is (6R)-5,10-methylene-5,6,7,8-tetrahydrofolate + NADP(+) = (6R)-5,10-methenyltetrahydrofolate + NADPH. It catalyses the reaction (6R)-5,10-methenyltetrahydrofolate + H2O = (6R)-10-formyltetrahydrofolate + H(+). It functions in the pathway one-carbon metabolism; tetrahydrofolate interconversion. In terms of biological role, catalyzes the oxidation of 5,10-methylenetetrahydrofolate to 5,10-methenyltetrahydrofolate and then the hydrolysis of 5,10-methenyltetrahydrofolate to 10-formyltetrahydrofolate. This is Bifunctional protein FolD from Vibrio vulnificus (strain CMCP6).